The primary structure comprises 1673 residues: Glutamine and serine-rich protein 1 (1673 aa).

8 disordered regions span residues 265–322 (VIPS…SSQA), 411–543 (DQTR…KSYV), 872–892 (RHMS…LSIN), 923–961 (QDLP…PKEG), 1050–1081 (DENA…QYSS), 1149–1182 (VIRP…KAEE), 1216–1272 (LSAL…EQLA), and 1390–1476 (KSKV…PPPI). Residues 289 to 309 (SSKTPKSQSVVSPELTQSYTK) are compositionally biased toward polar residues. Low complexity-rich tracts occupy residues 310 to 322 (SSQN…SSQA) and 411 to 458 (DQTR…PSDS). Positions 459–539 (YTSGQNQTLA…MQNSRTTADS (81 aa)) are enriched in polar residues. Over residues 947–956 (NIKNPPNVNQ) the composition is skewed to polar residues. Residues 1222–1233 (NSEKRLKTEGDK) show a composition bias toward basic and acidic residues. 2 stretches are compositionally biased toward polar residues: residues 1259-1272 (KPSQ…EQLA) and 1397-1411 (ARTT…SKVS). Over residues 1435 to 1451 (TKAEPPPKKRKQWKEEF) the composition is skewed to basic and acidic residues. The span at 1452–1462 (SSSQSDSSPDM) shows a compositional bias: low complexity.

Its subcellular location is the chromosome. Plays an essential role in the protection and maintenance of transcriptional and developmental programs. Protects many bivalent promoters and poised enhancers from hypermethylation, showing a marked preference for these regulatory elements over other types of promoters or enhancers. Mechanistically, cooperates with tet1 and binds to DNA in a common complex to inhibit the binding of dnmt3a/3b and therefore de novo methylation. This is Glutamine and serine-rich protein 1 (qser1) from Xenopus laevis (African clawed frog).